Consider the following 254-residue polypeptide: TLC domain-containing protein At5g14285 (254 aa).

Helical transmembrane passes span 12 to 32 (DLPI…FIVF), 45 to 65 (SCLI…RAVF), 82 to 101 (TVLD…YIVF), 124 to 144 (FLVF…EVTS), 172 to 192 (LSPP…PLFF), and 211 to 231 (WLWI…ILWI). Residues 38–248 (QIRPEASSCL…FSERKANKIR (211 aa)) form the TLC domain.

The protein localises to the membrane. The sequence is that of TLC domain-containing protein At5g14285 from Arabidopsis thaliana (Mouse-ear cress).